We begin with the raw amino-acid sequence, 224 residues long: Octanoyltransferase (224 aa).

The region spanning 29 to 224 (PGTPDELWLC…GDRLESYLSP (196 aa)) is the BPL/LPL catalytic domain. Residues 68–75 (RGGQVTYH), 157–159 (ALG), and 170–172 (GLA) contribute to the substrate site. Catalysis depends on Cys-188, which acts as the Acyl-thioester intermediate.

The protein belongs to the LipB family.

Its subcellular location is the cytoplasm. It catalyses the reaction octanoyl-[ACP] + L-lysyl-[protein] = N(6)-octanoyl-L-lysyl-[protein] + holo-[ACP] + H(+). The protein operates within protein modification; protein lipoylation via endogenous pathway; protein N(6)-(lipoyl)lysine from octanoyl-[acyl-carrier-protein]: step 1/2. Catalyzes the transfer of endogenously produced octanoic acid from octanoyl-acyl-carrier-protein onto the lipoyl domains of lipoate-dependent enzymes. Lipoyl-ACP can also act as a substrate although octanoyl-ACP is likely to be the physiological substrate. This Methylibium petroleiphilum (strain ATCC BAA-1232 / LMG 22953 / PM1) protein is Octanoyltransferase.